A 146-amino-acid chain; its full sequence is MKLHELKPSEGSRKERNRVGRGTGSGNGKTSGRGHKGQKARSGGGVRLGFEGGQLPLFRRIPKRGFTNINRKEFAIVNLDVLNRFEDGTEVTPELLIETGIIRNEKSGIKILSDGNIEKKLTVKANKFSAAAKEAIEAAGGKTEVI.

Residues 1 to 18 (MKLHELKPSEGSRKERNR) show a composition bias toward basic and acidic residues. The interval 1–50 (MKLHELKPSEGSRKERNRVGRGTGSGNGKTSGRGHKGQKARSGGGVRLGF) is disordered. Residues 21-31 (RGTGSGNGKTS) show a composition bias toward gly residues.

The protein belongs to the universal ribosomal protein uL15 family. As to quaternary structure, part of the 50S ribosomal subunit.

Functionally, binds to the 23S rRNA. This is Large ribosomal subunit protein uL15 from Listeria innocua serovar 6a (strain ATCC BAA-680 / CLIP 11262).